The following is a 370-amino-acid chain: tRNA-specific 2-thiouridylase MnmA (370 aa).

Residues 9-16 (GMSGGVDS) and methionine 35 each bind ATP. Residues 95 to 97 (NPD) are interaction with target base in tRNA. Catalysis depends on cysteine 100, which acts as the Nucleophile. Residues cysteine 100 and cysteine 196 are joined by a disulfide bond. An ATP-binding site is contributed by glycine 124. An interaction with tRNA region spans residues 146–148 (KDQ). Catalysis depends on cysteine 196, which acts as the Cysteine persulfide intermediate. The interval 308 to 309 (RY) is interaction with tRNA.

Belongs to the MnmA/TRMU family.

The protein localises to the cytoplasm. The catalysed reaction is S-sulfanyl-L-cysteinyl-[protein] + uridine(34) in tRNA + AH2 + ATP = 2-thiouridine(34) in tRNA + L-cysteinyl-[protein] + A + AMP + diphosphate + H(+). Catalyzes the 2-thiolation of uridine at the wobble position (U34) of tRNA, leading to the formation of s(2)U34. The chain is tRNA-specific 2-thiouridylase MnmA from Ralstonia pickettii (strain 12J).